The primary structure comprises 139 residues: Actin-depolymerizing factor 9 (139 aa).

The ADF-H domain maps to 7 to 139 (GLAVNDECKF…SLDIIRARAH (133 aa)).

The protein belongs to the actin-binding proteins ADF family.

Actin-depolymerizing protein. Severs actin filaments (F-actin) and binds to actin monomers. This Oryza sativa subsp. japonica (Rice) protein is Actin-depolymerizing factor 9 (ADF9).